Consider the following 237-residue polypeptide: uncharacterized protein (237 aa).

Belongs to the bactofilin family.

This is an uncharacterized protein from Bacillus subtilis (strain 168).